The chain runs to 231 residues: Flagellar L-ring protein 2 (231 aa).

An N-terminal signal peptide occupies residues 1 to 15 (MKNLILILPLLMLTG). A lipid anchor (N-palmitoyl cysteine) is attached at cysteine 16. Cysteine 16 carries S-diacylglycerol cysteine lipidation. Residues 30–54 (SPVGSGLRTQADPIPVTPRMRTPVS) are disordered.

It belongs to the FlgH family. The basal body constitutes a major portion of the flagellar organelle and consists of four rings (L,P,S, and M) mounted on a central rod.

It is found in the cell outer membrane. The protein localises to the bacterial flagellum basal body. Its function is as follows. Assembles around the rod to form the L-ring and probably protects the motor/basal body from shearing forces during rotation. This chain is Flagellar L-ring protein 2, found in Bradyrhizobium diazoefficiens (strain JCM 10833 / BCRC 13528 / IAM 13628 / NBRC 14792 / USDA 110).